Consider the following 303-residue polypeptide: Protoporphyrin uptake protein 1 (303 aa).

The Extracellular segment spans residues 1-18 (MSTTDSGFVLYHYTPSKA). Residues 19-39 (AAIVFVVLFIIMTVIFAVQTL) form a helical membrane-spanning segment. Residues 40 to 76 (YAARKSSKALKNNPFESSDDKVDSLEDAEYKQLKITP) are Cytoplasmic-facing. The chain crosses the membrane as a helical span at residues 77-97 (TVFAFIPFFTGCIMEAVGYIG). At 98-111 (RALSSSNPERTTPY) the chain is on the extracellular side. The helical transmembrane segment at 112–132 (IIQSVLLLVAPALIAATIYMI) threads the bilayer. Topologically, residues 133 to 154 (FGRLLHVMRCQSLILISARFGT) are cytoplasmic. Residues 155–175 (TFFVVGDVFSFFLQAAGGGLM) traverse the membrane as a helical segment. At 176 to 183 (SKAGSTKT) the chain is on the extracellular side. Residues 184 to 204 (GSGLITAGLFVQVIFFGFFII) form a helical membrane-spanning segment. The Cytoplasmic portion of the chain corresponds to 205–226 (NEIRFTVNVKRRCLFYEDISRK). Residues 227–247 (WIFVNATLLLSSMLILLRSIV) traverse the membrane as a helical segment. At 248-264 (RIVEFIQGFNGYIISHE) the chain is on the extracellular side. Residues 265–285 (YFIYVFDAVPMLLVIIAFSVG) form a helical membrane-spanning segment. Residues 286–303 (SFFGNVFDVIKECQTLSN) lie on the Cytoplasmic side of the membrane.

The protein belongs to the lipid-translocating exporter (LTE) (TC 9.A.26.1) family. Post-translationally, N-glycosylated.

It localises to the cell membrane. Functionally, involved in inducible protoporphyrin IX influx and heme efflux. The protein is Protoporphyrin uptake protein 1 (PUG1) of Saccharomyces cerevisiae (strain ATCC 204508 / S288c) (Baker's yeast).